The following is a 289-amino-acid chain: (3R)-3-[(carboxymethyl)amino]fatty acid oxygenase/decarboxylase (289 aa).

Residues Tyr-65, Tyr-70, and Gly-93 each coordinate a (3R)-3-[(carboxymethyl)amino]fatty acid. 2 residues coordinate Fe(2+): His-97 and Asp-99. The a (3R)-3-[(carboxymethyl)amino]fatty acid site is built by Tyr-100 and Lys-158. Residue His-260 coordinates Fe(2+). His-264 is a binding site for 2-oxoglutarate. Arg-275 lines the a (3R)-3-[(carboxymethyl)amino]fatty acid pocket.

It belongs to the TfdA dioxygenase family. The cofactor is Fe(2+).

The enzyme catalyses a (3R)-3-[(carboxymethyl)amino]fatty acid + 2 2-oxoglutarate + 2 O2 = a (3R)-3-isocyanyl-fatty acid + 2 succinate + 3 CO2 + 2 H2O. It carries out the reaction a (3R)-3-[(carboxymethyl)amino]fatty acid + 2-oxoglutarate + O2 = a (3R)-3-{[carboxy(hydroxy)methyl]amino}fatty acid + succinate + CO2. The catalysed reaction is a (3R)-3-{[carboxy(hydroxy)methyl]amino}fatty acid + 2-oxoglutarate + O2 = a (3R)-3-isocyanyl-fatty acid + succinate + 2 CO2 + 2 H2O. In terms of biological role, involved in the biosynthesis of a unique class of isonitrile lipopeptides (INLPs) that seem to play a role in metal acquisition. Catalyzes the conversion of (3R)-3-[(carboxymethyl)amino]fatty acids to (3R)-3-isocyanyl-fatty acids through an oxidative decarboxylation mechanism, thereby generating the isonitrile group of INLPs. The sequence is that of (3R)-3-[(carboxymethyl)amino]fatty acid oxygenase/decarboxylase from Mycobacterium bovis (strain ATCC BAA-935 / AF2122/97).